We begin with the raw amino-acid sequence, 216 residues long: Transmembrane emp24 domain-containing protein p24delta5 (216 aa).

The N-terminal stretch at 1–27 (MAINRIAHGSLFLTVVLFFLTVNYGEA) is a signal peptide. The Lumenal portion of the chain corresponds to 28 to 183 (IWLTIPTTGG…REVSETTNSR (156 aa)). One can recognise a GOLD domain in the interval 38–151 (TKCVSEEIQS…IEGVELQLRR (114 aa)). An N-linked (GlcNAc...) asparagine glycan is attached at N86. Positions 137–159 (AKKEKIEGVELQLRRLEGLVLSI) form a coiled coil. Omega-N-methylated arginine occurs at positions 169 and 174. A helical transmembrane segment spans residues 184–204 (VAWFSIMSLGVCVVVVGSQIL). Over 205 to 216 (YLKRYFHKKKLI) the chain is Cytoplasmic. The COPII vesicle coat-binding signature appears at 209–210 (YF). Positions 209 to 216 (YFHKKKLI) match the COPI vesicle coat-binding motif.

This sequence belongs to the EMP24/GP25L family. In terms of assembly, probably oligomerizes with other members of the EMP24/GP25L family. Associates with the COPI vesicle coat (coatomer). Associates with the COPII vesicle coat (coatomer). Interacts with p24beta2.

It localises to the endoplasmic reticulum membrane. Its function is as follows. Involved in vesicular protein trafficking. Mainly functions in the early secretory pathway. Thought to act as cargo receptor at the lumenal side for incorporation of secretory cargo molecules into transport vesicles and to be involved in vesicle coat formation at the cytoplasmic side. Interacts with p24beta2 at endoplasmic reticulum export sites for endoplasmic reticulum exit and coupled transport to the Golgi apparatus. Once in the Golgi, interacts very efficiently with the COPI machinery for retrograde transport back to the endoplasmic reticulum. This is Transmembrane emp24 domain-containing protein p24delta5 from Arabidopsis thaliana (Mouse-ear cress).